Consider the following 344-residue polypeptide: 17-beta-hydroxysteroid dehydrogenase type 1 (344 aa).

Residue 3–32 (PTVVLITGCSSGIGMHLAVRLASDRSQSFK) coordinates NAD(+). Residues 10–38 (GCSSGIGMHLAVRLASDRSQSFKVYATLR) and Asp-66 each bind NADP(+). Residue Ser-135 is modified to Phosphoserine. Substrate is bound at residue Ser-143. Tyr-156 (proton acceptor) is an active-site residue. Lys-160 lines the NADP(+) pocket.

Belongs to the short-chain dehydrogenases/reductases (SDR) family. As to quaternary structure, homodimer. Exists predominantly as a homodimer but also exits as monomer.

Its subcellular location is the cytoplasm. The catalysed reaction is 17beta-estradiol + NAD(+) = estrone + NADH + H(+). It carries out the reaction 17beta-estradiol + NADP(+) = estrone + NADPH + H(+). It catalyses the reaction testosterone + NADP(+) = androst-4-ene-3,17-dione + NADPH + H(+). It functions in the pathway steroid biosynthesis; estrogen biosynthesis. Functionally, favors the reduction of estrogens and androgens. Converts estrone (E1) to a more potent estrogen, 17beta-estradiol (E2). Also has 20-alpha-HSD activity. Uses preferentially NADH. The chain is 17-beta-hydroxysteroid dehydrogenase type 1 from Mus musculus (Mouse).